The primary structure comprises 298 residues: Porphobilinogen deaminase (298 aa).

Cysteine 239 is subject to S-(dipyrrolylmethanemethyl)cysteine.

It belongs to the HMBS family. In terms of assembly, monomer. The cofactor is dipyrromethane.

It catalyses the reaction 4 porphobilinogen + H2O = hydroxymethylbilane + 4 NH4(+). It functions in the pathway porphyrin-containing compound metabolism; protoporphyrin-IX biosynthesis; coproporphyrinogen-III from 5-aminolevulinate: step 2/4. Functionally, tetrapolymerization of the monopyrrole PBG into the hydroxymethylbilane pre-uroporphyrinogen in several discrete steps. This is Porphobilinogen deaminase from Ehrlichia chaffeensis (strain ATCC CRL-10679 / Arkansas).